A 61-amino-acid polypeptide reads, in one-letter code: Disintegrin atroxatin (61 aa).

In terms of domain architecture, Disintegrin spans 1-61 (NPCCDAATCK…ADCPRKGIYG (61 aa)). Disulfide bonds link C3–C26, C9–C23, C17–C23, C22–C47, and C35–C54. Residues 39 to 41 (RGD) carry the Cell attachment site motif.

It belongs to the venom metalloproteinase (M12B) family. P-II subfamily. P-IIa sub-subfamily. Monomer (disintegrin). Expressed by the venom gland.

The protein resides in the secreted. Its function is as follows. Inhibits fibrinogen interaction with platelets. Acts by binding to alpha-IIb/beta-3 (ITGA2B/ITGB3) on the platelet surface and inhibits aggregation induced by ADP, thrombin, platelet-activating factor and collagen. In Crotalus atrox (Western diamondback rattlesnake), this protein is Disintegrin atroxatin.